We begin with the raw amino-acid sequence, 866 residues long: Rifampicin phosphotransferase (866 aa).

An ATP-binding region spans residues 1–313; that stretch reads MSSLVLGLHE…FYIVQSRPIT (313 aa). Residues Lys22, Arg116, Gly131, Thr135, Gln182, Glu296, Gln308, and Arg310 each coordinate ATP. Residues 326-754 form a rifampicin-binding region; the sequence is NHVYISVGHQ…TSDGEIVTGE (429 aa). Residues 410 to 429 form a disordered region; it reads IPNDKTAPNPSRGNADMPAQ. The tract at residues 767–865 is swivel phosphohistidine; sequence GLPVSSGVIE…VHGTEGYIEI (99 aa). His825 acts as the Tele-phosphohistidine intermediate in catalysis.

Belongs to the rifampicin phosphotransferase family.

The enzyme catalyses rifampicin + ATP + H2O = 21-phosphorifampicin + AMP + phosphate + 2 H(+). Functionally, catalyzes the phosphorylation of rifampicin, also known as rifampin (RIF), leading to its inactivation. The polypeptide is Rifampicin phosphotransferase (Bacillus subtilis (strain 168)).